The following is a 346-amino-acid chain: Nitrilase 1 (346 aa).

Ser-2 bears the N-acetylserine mark. A CN hydrolase domain is found at 25–297; it reads VRVTIVQSST…EGLVTADIDL (273 aa). Glu-65 (proton acceptor) is an active-site residue. Catalysis depends on Lys-152, which acts as the Proton donor. Cys-186 functions as the Nucleophile in the catalytic mechanism.

It belongs to the carbon-nitrogen hydrolase superfamily. Nitrilase family. As to quaternary structure, interacts with DEK3. As to expression, expressed in cotyledons, hypocotyls, leaves, roots, stems, flowers and siliques.

It carries out the reaction a nitrile + 2 H2O = a carboxylate + NH4(+). In terms of biological role, can convert indole-3-acetonitrile to the plant hormone indole-3-acetic acid. The protein is Nitrilase 1 of Arabidopsis thaliana (Mouse-ear cress).